An 81-amino-acid polypeptide reads, in one-letter code: Large ribosomal subunit protein bL31B (81 aa).

It belongs to the bacterial ribosomal protein bL31 family. Type B subfamily. In terms of assembly, part of the 50S ribosomal subunit.

The protein is Large ribosomal subunit protein bL31B of Borrelia garinii subsp. bavariensis (strain ATCC BAA-2496 / DSM 23469 / PBi) (Borreliella bavariensis).